Here is a 61-residue protein sequence, read N- to C-terminus: Large ribosomal subunit protein eL37 (61 aa).

Zn(2+) is bound by residues C19, C22, C34, and C37. A C4-type zinc finger spans residues 19 to 37 (CRRCGRNSFNARKGYCAAC).

The protein belongs to the eukaryotic ribosomal protein eL37 family. Zn(2+) is required as a cofactor.

Its function is as follows. Binds to the 23S rRNA. The protein is Large ribosomal subunit protein eL37 of Sulfolobus acidocaldarius (strain ATCC 33909 / DSM 639 / JCM 8929 / NBRC 15157 / NCIMB 11770).